A 351-amino-acid polypeptide reads, in one-letter code: Protein FAM118B (351 aa).

Alanine 2 carries the post-translational modification N-acetylalanine. Serine 9 carries the phosphoserine modification.

This sequence belongs to the FAM118 family.

The protein resides in the nucleus. It is found in the cajal body. Its function is as follows. May play a role in Cajal bodies formation. The protein is Protein FAM118B (FAM118B) of Bos taurus (Bovine).